Here is a 942-residue protein sequence, read N- to C-terminus: Valine--tRNA ligase (942 aa).

A 'HIGH' region motif is present at residues 43–53 (PNVTGTLHMGH). The 'KMSKS' region signature appears at 551-555 (KMSKS). An ATP-binding site is contributed by K554. A coiled-coil region spans residues 876–942 (EGLVDLDAER…AGLREQRAKL (67 aa)).

This sequence belongs to the class-I aminoacyl-tRNA synthetase family. ValS type 1 subfamily. In terms of assembly, monomer.

The protein resides in the cytoplasm. It carries out the reaction tRNA(Val) + L-valine + ATP = L-valyl-tRNA(Val) + AMP + diphosphate. In terms of biological role, catalyzes the attachment of valine to tRNA(Val). As ValRS can inadvertently accommodate and process structurally similar amino acids such as threonine, to avoid such errors, it has a 'posttransfer' editing activity that hydrolyzes mischarged Thr-tRNA(Val) in a tRNA-dependent manner. The protein is Valine--tRNA ligase of Stenotrophomonas maltophilia (strain K279a).